The chain runs to 176 residues: Inner membrane-spanning protein YciB (176 aa).

6 helical membrane passes run Phe3 to Phe23, Thr24 to His44, Thr49 to His69, Lys72 to Ala92, Leu121 to Phe141, and Phe149 to Leu169.

It belongs to the YciB family.

It is found in the cell inner membrane. Its function is as follows. Plays a role in cell envelope biogenesis, maintenance of cell envelope integrity and membrane homeostasis. This is Inner membrane-spanning protein YciB from Burkholderia cenocepacia (strain ATCC BAA-245 / DSM 16553 / LMG 16656 / NCTC 13227 / J2315 / CF5610) (Burkholderia cepacia (strain J2315)).